The primary structure comprises 559 residues: Tryprostatin B 6-hydroxylase (559 aa).

3 helical membrane-spanning segments follow: residues 13–35 (PSVM…HLSY), 48–65 (YVRF…LLYA), and 82–104 (VSLL…RTLF). A heme-binding site is contributed by C502.

This sequence belongs to the cytochrome P450 family. The cofactor is heme.

Its subcellular location is the membrane. The catalysed reaction is tryprostatin B + reduced [NADPH--hemoprotein reductase] + O2 = 6-hydroxytryprostatin B + oxidized [NADPH--hemoprotein reductase] + H2O + H(+). Its pathway is mycotoxin biosynthesis. Its function is as follows. Cytochrome P450 monooxygenase; part of the gene cluster that mediates the biosynthesis of fumitremorgins, indole alkaloids that carry not only intriguing chemical structures, but also interesting biological and pharmacological activities. The biosynthesis of fumitremorgin-type alkaloids begins by condensation of the two amino acids L-tryptophan and L-proline to brevianamide F, catalyzed by the non-ribosomal peptide synthetase ftmA. Brevianamide F is then prenylated by the prenyltransferase ftmPT1/ftmB in the presence of dimethylallyl diphosphate, resulting in the formation of tryprostatin B. The three cytochrome P450 monooxygenases, ftmP450-1/ftmC, ftmP450-2/ftmE and ftmP450-3/FtmG, are responsible for the conversion of tryprostatin B to 6-hydroxytryprostatin B, tryprostatin A to fumitremorgin C and fumitremorgin C to 12,13-dihydroxyfumitremorgin C, respectively. The putative methyltransferase ftmMT/ftmD is expected for the conversion of 6-hydroxytryprostatin B to tryprostatin A. FtmPT2/FtmH catalyzes the prenylation of 12,13-dihydroxyfumitre-morgin C in the presence of dimethylallyl diphosphate, resulting in the formation of fumitremorgin B. Fumitremorgin B is further converted to verruculogen by ftmOx1/ftmF via the insertion of an endoperoxide bond between the two prenyl moieties. In some fungal species, verruculogen is further converted to fumitremorgin A, but the enzymes involved in this step have not been identified yet. The polypeptide is Tryprostatin B 6-hydroxylase (Aspergillus fumigatus (Neosartorya fumigata)).